The primary structure comprises 224 residues: MKKLLLIATTSATILSSSISFADDMGNEWYLRVDAGAAMFNKEQDKATSVKLKSNTTVPVDLGIGYYIFENFRADLTLGTIIGGKLKASGSATHAPFTGTNVSVSHKPTITRLLINGYVDLTNFDLFDVFAGAGVGPALVKEKITYNGITGLSSNTKNRTNISYRLTLGTSAQIADGVKAELAYSWIYDGRTKSKNVIYQGTSVLTGGMRYQSHNLTAGIRFDI.

A signal peptide spans 1-22; that stretch reads MKKLLLIATTSATILSSSISFA.

The polypeptide is Putative adhesin A1C_06425 (Rickettsia akari (strain Hartford)).